The chain runs to 184 residues: Latex serine proteinase inhibitor (184 aa).

Cysteines 45 and 89 form a disulfide. Asn84 and Asn90 each carry an N-linked (GlcNAc...) asparagine glycan. The cysteines at positions 142 and 153 are disulfide-linked.

This sequence belongs to the protease inhibitor I3 (leguminous Kunitz-type inhibitor) family.

It is found in the secreted. The protein resides in the extracellular space. This Carica papaya (Papaya) protein is Latex serine proteinase inhibitor.